The primary structure comprises 145 residues: Mannitol-specific phosphotransferase enzyme IIA component (145 aa).

Residues 2-145 (ENLTNISIEL…EEITENLAIA (144 aa)) form the PTS EIIA type-2 domain. The active-site Tele-phosphohistidine intermediate is His-62. At His-62 the chain carries Phosphohistidine; by HPr.

It is found in the cytoplasm. The phosphoenolpyruvate-dependent sugar phosphotransferase system (sugar PTS), a major carbohydrate active transport system, catalyzes the phosphorylation of incoming sugar substrates concomitantly with their translocation across the cell membrane. The enzyme II CmtAB PTS system is involved in D-mannitol transport. The protein is Mannitol-specific phosphotransferase enzyme IIA component of Enterococcus faecalis (strain ATCC 700802 / V583).